Reading from the N-terminus, the 422-residue chain is FAD-dependent monooxygenase ptmM (422 aa).

The helical transmembrane segment at 8 to 24 (VIIVGGSIAGLTLAHCL) threads the bilayer. FAD-binding residues include E35, G49, R108, D308, and A321.

Belongs to the paxM FAD-dependent monooxygenase family. FAD serves as cofactor.

The protein localises to the membrane. It functions in the pathway secondary metabolite biosynthesis. Functionally, FAD-dependent monooxygenase; part of the gene cluster that mediates the biosynthesis of the indole diterpenes penitrems. The geranylgeranyl diphosphate (GGPP) synthase ptmG catalyzes the first step in penitrem biosynthesis via conversion of farnesyl pyrophosphate and isopentyl pyrophosphate into geranylgeranyl pyrophosphate (GGPP). Condensation of indole-3-glycerol phosphate with GGPP by the prenyl transferase ptmC then forms 3-geranylgeranylindole (3-GGI). Epoxidation by the FAD-dependent monooxygenase ptmM leads to a epoxidized-GGI that is substrate of the terpene cyclase ptmB for cyclization to yield paspaline. Paspaline is subsequently converted to 13-desoxypaxilline by the cytochrome P450 monooxygenase ptmP, the latter being then converted to paxilline by the cytochrome P450 monooxygenase ptmQ. Paxilline is converted to beta-paxitriol via C-10 ketoreduction by the short-chain dehydrogenase ptmH which can be monoprenylated at the C-20 by the indole diterpene prenyltransferase ptmD. A two-step elimination (acetylation and elimination) process performed by the O-acetyltransferase ptmV and ptmI leads to the production of the prenylated form of penijanthine. The FAD-linked oxidoreductase ptmO then converts the prenylated form of penijanthine into PC-M5 which is in turn transformed into PC-M4 by the aromatic dimethylallyltransferase ptmE. Five sequential oxidative transformations performed by the cytochrome P450 monooxygenases ptmK, ptmU, ptmL, ptmN and ptmJ yield the various penitrem compounds. PtmK, ptmU and ptmM are involved in the formation of the key bicyclic ring of penitrem C via the formation of the intermediates secopenitrem D and penitrem D. PtmL catalyzes the epoxidation of penitrem D and C to yield penitrem B and F, respectively. PtmJ catalyzes the last benzylic hydroxylation to convert penitrem B to prenitrem E and penitrem F to penitrem A. The protein is FAD-dependent monooxygenase ptmM of Penicillium ochrochloron.